The following is a 159-amino-acid chain: Cytochrome c-type biogenesis protein CcmE (159 aa).

Residues Met-1 to Arg-8 lie on the Cytoplasmic side of the membrane. A helical; Signal-anchor for type II membrane protein transmembrane segment spans residues Leu-9–Ala-29. At Leu-30–Ser-159 the chain is on the periplasmic side. Residues His-130 and Tyr-134 each coordinate heme. Positions Glu-132–His-147 are enriched in basic and acidic residues. The tract at residues Glu-132–Ser-159 is disordered.

The protein belongs to the CcmE/CycJ family.

Its subcellular location is the cell inner membrane. Functionally, heme chaperone required for the biogenesis of c-type cytochromes. Transiently binds heme delivered by CcmC and transfers the heme to apo-cytochromes in a process facilitated by CcmF and CcmH. The protein is Cytochrome c-type biogenesis protein CcmE of Shigella sonnei (strain Ss046).